We begin with the raw amino-acid sequence, 122 residues long: uncharacterized protein (122 aa).

4 helical membrane passes run Ile-7 to Asp-27, Leu-29 to Ile-49, Ala-62 to Pro-82, and Lys-89 to Tyr-109.

It is found in the cell membrane. This is an uncharacterized protein from Methanocaldococcus jannaschii (strain ATCC 43067 / DSM 2661 / JAL-1 / JCM 10045 / NBRC 100440) (Methanococcus jannaschii).